Reading from the N-terminus, the 623-residue chain is GATA zinc finger domain-containing protein 6 (623 aa).

Disordered stretches follow at residues 137 to 156 (IISP…GNNF), 167 to 197 (INNN…TAST), and 245 to 289 (PTTT…TAST). The segment covering 167 to 179 (INNNSNNNNNNNN) has biased composition (low complexity). The segment covering 185 to 197 (KQQTSKGSATAST) has biased composition (polar residues). The segment at 320 to 345 (CHSCGETQTSQWRRGPDGCKSLCNAC) adopts a GATA-type zinc-finger fold. The segment at 398–509 (IQQQQQKDDH…SINHNDKLIN (112 aa)) is disordered. The span at 410–482 (LSRPSSFSSQ…TSPTISSESL (73 aa)) shows a compositional bias: low complexity. Positions 483–502 (NFSSATNTPTNLSPNLQSIN) are enriched in polar residues.

This Dictyostelium discoideum (Social amoeba) protein is GATA zinc finger domain-containing protein 6 (gtaF).